The primary structure comprises 188 residues: dCTP deaminase (188 aa).

DCTP contacts are provided by residues 111–116 (KSTYAR), 135–137 (TLE), Gln-156, Tyr-170, and Gln-180. Glu-137 serves as the catalytic Proton donor/acceptor.

The protein belongs to the dCTP deaminase family. Homotrimer.

It catalyses the reaction dCTP + H2O + H(+) = dUTP + NH4(+). The protein operates within pyrimidine metabolism; dUMP biosynthesis; dUMP from dCTP (dUTP route): step 1/2. Functionally, catalyzes the deamination of dCTP to dUTP. This Chromohalobacter salexigens (strain ATCC BAA-138 / DSM 3043 / CIP 106854 / NCIMB 13768 / 1H11) protein is dCTP deaminase.